The chain runs to 289 residues: MTLNVKGEGLGAQITGVDPKNLDDITTDEIRDIVYANKLVILKDVNPSPEEFLKLGKIVGQIVPYYEPMYHHEDHPEIFVSSTEEGQGVPKTGAFWHIDYMFMPEPFAFSMVLPLAVPGHDRGTYFIDLAKVWQSLPAAQQAPARGTLSTHDPRRHIKIRPSDVYRPIGEVWDEISRATPPIKWPTVIRHPKTGEEILYICATGTTKIEDKDGNLVDPAVLAELLAATGQLDPEYNSPFIHTQHYEVGDIILWDNRVLMHRAKHGTASGTLTTYRLTMLDGLETPGYPA.

3 residues coordinate a (3R)-3-[(carboxymethyl)amino]fatty acid: Tyr-65, Tyr-70, and Gly-93. 2 residues coordinate Fe(2+): His-97 and Asp-99. Residues Tyr-100 and Lys-158 each contribute to the a (3R)-3-[(carboxymethyl)amino]fatty acid site. Residue His-260 participates in Fe(2+) binding. Residue His-264 coordinates 2-oxoglutarate. Arg-275 provides a ligand contact to a (3R)-3-[(carboxymethyl)amino]fatty acid.

Belongs to the TfdA dioxygenase family. It depends on Fe(2+) as a cofactor.

The enzyme catalyses a (3R)-3-[(carboxymethyl)amino]fatty acid + 2 2-oxoglutarate + 2 O2 = a (3R)-3-isocyanyl-fatty acid + 2 succinate + 3 CO2 + 2 H2O. The catalysed reaction is a (3R)-3-[(carboxymethyl)amino]fatty acid + 2-oxoglutarate + O2 = a (3R)-3-{[carboxy(hydroxy)methyl]amino}fatty acid + succinate + CO2. It carries out the reaction a (3R)-3-{[carboxy(hydroxy)methyl]amino}fatty acid + 2-oxoglutarate + O2 = a (3R)-3-isocyanyl-fatty acid + succinate + 2 CO2 + 2 H2O. Involved in the biosynthesis of a unique class of isonitrile lipopeptides (INLPs) that seem to play a role in metal acquisition in M.marinum. Catalyzes the conversion of (3R)-3-[(carboxymethyl)amino]fatty acids to (3R)-3-isocyanyl-fatty acids through an oxidative decarboxylation mechanism, thereby generating the isonitrile group of INLPs. The protein is (3R)-3-[(carboxymethyl)amino]fatty acid oxygenase/decarboxylase of Mycobacterium marinum (strain ATCC BAA-535 / M).